Here is a 322-residue protein sequence, read N- to C-terminus: TATA box-binding protein-associated factor RNA polymerase I subunit D (322 aa).

2 disordered regions span residues 1-70 and 82-116; these read MAQS…SIEP and FKKK…RITR. Position 23 is a phosphoserine (S23). The segment covering 82–107 has biased composition (basic residues); it reads FKKKKRKKRKKRKYEPKLRPRGRPRG. At S137 the chain carries Phosphoserine. The segment at 198–219 is disordered; sequence YMDDDGSLSPIEEPLTEDEATN. S232 is modified (phosphoserine). Residues 257-267 show a composition bias toward basic and acidic residues; that stretch reads FSKKAKDATHR. Residues 257-276 form a disordered region; sequence FSKKAKDATHREKGHRRTLK.

Component of the transcription factor SL1/TIF-IB complex, composed of TBP and at least TAF1A, TAF1B, TAF1C and TAF1D. Interacts with UBTF.

The protein resides in the nucleus. In terms of biological role, component of the transcription factor SL1/TIF-IB complex, which is involved in the assembly of the PIC (preinitiation complex) during RNA polymerase I-dependent transcription. The rate of PIC formation probably is primarily dependent on the rate of association of SL1/TIF-IB with the rDNA promoter. SL1/TIF-IB is involved in stabilization of nucleolar transcription factor 1/UBTF on rDNA. Formation of SL1/TIF-IB excludes the association of TBP with TFIID subunits. In Mus musculus (Mouse), this protein is TATA box-binding protein-associated factor RNA polymerase I subunit D (Taf1d).